Consider the following 262-residue polypeptide: uncharacterized protein (262 aa).

Helical transmembrane passes span 4-24, 28-48, and 62-82; these read LIVFLSMLSSSVAGFFGRFLG, VSRFNLIIFLILLVFSICLFR, and CYLALVCQISLFLVLLRSHIL. A coiled-coil region spans residues 152–181; that stretch reads EREARAQEHDRISAEVETITSACENLEAAM.

It is found in the mitochondrion membrane. This is an uncharacterized protein from Arabidopsis thaliana (Mouse-ear cress).